The chain runs to 176 residues: Large ribosomal subunit protein uL16 (176 aa).

Belongs to the universal ribosomal protein uL16 family.

This chain is Large ribosomal subunit protein uL16, found in Thermoplasma acidophilum (strain ATCC 25905 / DSM 1728 / JCM 9062 / NBRC 15155 / AMRC-C165).